A 1046-amino-acid polypeptide reads, in one-letter code: SWI/SNF-related matrix-associated actin-dependent regulator of chromatin subfamily A member 1 (1046 aa).

Residues 27 to 61 (EQPGPSTFKEEGAAAAATEGTTATEKGEKKEKITS) are disordered. Over residues 39–50 (AAAAATEGTTAT) the composition is skewed to low complexity. Phosphoserine occurs at positions 120 and 123. A Helicase ATP-binding domain is found at 199–364 (ISLYENGVNG…WALLNFLLPD (166 aa)). 212 to 219 (DEMGLGKT) contributes to the ATP binding site. The short motif at 315-318 (DEAH) is the DEAH box element. In terms of domain architecture, Helicase C-terminal spans 494–645 (ALDKLLARIK…SIVIQQGRLI (152 aa)). Glycyl lysine isopeptide (Lys-Gly) (interchain with G-Cter in SUMO2) cross-links involve residues Lys-654, Lys-720, and Lys-742. Residues 819–840 (AQREEQKKIDGAEPLTPQETEE) form a disordered region. Basic and acidic residues predominate over residues 820 to 829 (QREEQKKIDG). One can recognise an SANT 1 domain in the interval 847–899 (QGFTNWTKRDFNQFIKANEKYGRDDIDNIAREVEGKSPEEVMEYSAVFWERCN). Phosphotyrosine is present on Tyr-946. Positions 950–1014 (KGKNYTEEED…QRRCNTLISL (65 aa)) constitute an SANT 2 domain. The stretch at 1003 to 1037 (EFQRRCNTLISLIEKENMEIEERERAEKKKRATKT) forms a coiled coil. A disordered region spans residues 1025–1046 (RERAEKKKRATKTPMVKFSAFS).

Belongs to the SNF2/RAD54 helicase family. ISWI subfamily. As to quaternary structure, may form homodimers. Component of the ACF-1 ISWI chromatin remodeling complex at least composed of SMARCA1 and BAZ1A, which regulates the spacing of histone octamers on the DNA template to facilitate access to DNA. Within the complex interacts with BAZ1A; the interaction is direct. Component of the WICH-1 ISWI chromatin remodeling complex at least composed of SMARCA1 and BAZ1B/WSTF. Within the complex interacts with BAZ1B/WSTF. Component of the NoRC-1 ISWI chromatin remodeling complex at least composed of SMARCA1 and BAZ2A/TIP5. Within the complex interacts with BAZ2A/TIP5. Component of the BRF-1 ISWI chromatin remodeling complex at least composed of SMARCA1 and BAZ2B. Within the complex interacts with BAZ2B. Component of the NURF-1 ISWI chromatin remodeling complex (also called the nucleosome-remodeling factor (NURF) complex) at least composed of SMARCA1, BPTF, RBBP4 and RBBP7. Within the complex interacts with BPTF. Within the complex interacts with RBBP4 and RBBP7. Component of the CERF-1 ISWI chromatin remodeling complex (also called the CECR2-containing-remodeling factor (CERF) complex) at least composed of CECR2 and SMARCA1. LUZP1 is detected as part of the CERF-1 complex in embryonic stem cells where it is involved in complex stabilization but is not detected in the complex in the testis. Component of the RSF-1 ISWI chromatin remodeling complex at least composed of SMARCA1 and RSF1. Within the complex interacts with RSF1. Interacts with PRLR. Interacts with ERCC6. Predominantly expressed in cortex, cerebellum, ovaries, testes, uterus and placenta.

It is found in the nucleus. It carries out the reaction ATP + H2O = ADP + phosphate + H(+). In terms of biological role, ATPase that possesses intrinsic ATP-dependent chromatin-remodeling activity. ATPase activity is substrate-dependent, and is increased when nucleosomes are the substrate, but is also catalytically active when DNA alone is the substrate. Catalytic subunit of ISWI chromatin-remodeling complexes, which form ordered nucleosome arrays on chromatin and facilitate access to DNA during DNA-templated processes such as DNA replication, transcription, and repair. Within the ISWI chromatin-remodeling complexes, slides edge- and center-positioned histone octamers away from their original location on the DNA template. Catalytic activity and histone octamer sliding propensity is regulated and determined by components of the ISWI chromatin-remodeling complexes. The BAZ1A-, BAZ1B-, BAZ2A- and BAZ2B-containing ISWI chromatin-remodeling complexes regulate the spacing of nucleosomes along the chromatin and have the ability to slide mononucleosomes to the center of a DNA template. The CECR2- and RSF1-containing ISWI chromatin-remodeling complexes do not have the ability to slide mononucleosomes to the center of a DNA template. Within the NURF-1 and CERF-1 ISWI chromatin remodeling complexes, nucleosomes are the preferred substrate for its ATPase activity. Within the NURF-1 ISWI chromatin-remodeling complex, binds to the promoters of En1 and En2 to positively regulate their expression and promote brain development. May promote neurite outgrowth. May be involved in the development of luteal cells. Facilitates nucleosome assembly during DNA replication, ensuring replication fork progression and genomic stability by preventing replication stress and nascent DNA gaps. This Mus musculus (Mouse) protein is SWI/SNF-related matrix-associated actin-dependent regulator of chromatin subfamily A member 1 (Smarca1).